The sequence spans 759 residues: Glycerol-3-phosphate O-acyltransferase 1 (759 aa).

Residues 1-48 are Lumenal-facing; it reads MPAPKLTEKFASSKSTQKTTNYSSIEAKSVKTSADQAYIYQEPSATKK. Residues 49–69 form a helical membrane-spanning segment; sequence ILYSIATWLLYNIFHCFFREI. The Cytoplasmic segment spans residues 70 to 434; sequence RGRGSFKVPQ…AKVNFAKNLG (365 aa). The short motif at 414-419 is the HXXXXD motif element; sequence HYNLPD. A helical transmembrane segment spans residues 435 to 449; sequence LVFFRSIGLCILFSL. Residue Ala450 is a topological domain, lumenal. The helical transmembrane segment at 451–465 threads the bilayer; sequence MPGIIMFSPVFILAK. Residues 466–493 lie on the Cytoplasmic side of the membrane; the sequence is RISQEKARTALSKSTVKIKANDVIATWK. A helical transmembrane segment spans residues 494-514; sequence ILIGMGFAPLLYIFWSVLITY. The Lumenal portion of the chain corresponds to 515–523; the sequence is YLRHKPWNK. A helical membrane pass occupies residues 524–544; the sequence is IYVFSGSYISCVIVTYSALIV. Residues 545 to 759 are Cytoplasmic-facing; that stretch reads GDIGMDGFKS…EEEEGKEGDA (215 aa). Disordered stretches follow at residues 613–667, 684–705, and 729–759; these read EEDR…SLVN, RKSE…EFEV, and IGEN…EGDA. Residues 647–659 are compositionally biased toward basic and acidic residues; that stretch reads RDNHDAYEHHNQD. Positions 688-702 are enriched in low complexity; it reads SSLASTSVAPSSSSE. The segment covering 736 to 759 has biased composition (acidic residues); sequence EEEEEEEEEEEEEEEEEEGKEGDA.

The protein belongs to the GPAT/DAPAT family.

The protein localises to the endoplasmic reticulum membrane. It carries out the reaction sn-glycerol 3-phosphate + an acyl-CoA = a 1-acyl-sn-glycero-3-phosphate + CoA. The catalysed reaction is dihydroxyacetone phosphate + an acyl-CoA = a 1-acylglycerone 3-phosphate + CoA. The enzyme catalyses sn-glycerol 3-phosphate + hexadecanoyl-CoA = 1-hexadecanoyl-sn-glycero-3-phosphate + CoA. It catalyses the reaction (9Z)-hexadecenoyl-CoA + sn-glycerol 3-phosphate = 1-(9Z-hexadecenoyl)-sn-glycero-3-phosphate + CoA. It carries out the reaction sn-glycerol 3-phosphate + octadecanoyl-CoA = 1-octadecanoyl-sn-glycero-3-phosphate + CoA. The catalysed reaction is sn-glycerol 3-phosphate + (9Z)-octadecenoyl-CoA = 1-(9Z-octadecenoyl)-sn-glycero-3-phosphate + CoA. It participates in phospholipid metabolism; CDP-diacylglycerol biosynthesis; CDP-diacylglycerol from sn-glycerol 3-phosphate: step 1/3. Dual substrate-specific glycerol-3-phosphate/dihydroxyacetone phosphate sn-1 acyltransferase, catalyzing the first and committed reaction in the de novo synthesis of glycerophospholipids and triacylglycerols (TAGs). Prefers Gly-3-P over dihydroxyacetone phosphate and has a marked preference for 16-carbon fatty acyl chains. Transfers a fatty acid from fatty acyl-CoA to the sn-1 position of glycerol-3-phosphate to produce lysophosphatidic acid (LysoPA). These lipids not only are precursors of glycerolipids, but also are dynamic components of signal transduction systems that control cell physiology. SCT1 is the primary supplier of diacylglycerols (DAG), used mainly in TAG synthesis and phosphatidylcholine (PC) synthesis through the CDP-choline pathway. Regulates fatty acid desaturation, that is, the ratio of unsaturated versus saturated fatty acyl chains, by competing with the desaturase OLE1 for the common substrate C16:0-CoA. Sequesters C16:0-CoA into lipids, thereby shielding it from desaturation by OLE1. The chain is Glycerol-3-phosphate O-acyltransferase 1 from Saccharomyces cerevisiae (strain ATCC 204508 / S288c) (Baker's yeast).